Here is a 234-residue protein sequence, read N- to C-terminus: Small ribosomal subunit protein uS2 (234 aa).

Belongs to the universal ribosomal protein uS2 family.

The sequence is that of Small ribosomal subunit protein uS2 from Prochlorococcus marinus (strain AS9601).